We begin with the raw amino-acid sequence, 447 residues long: N-succinylarginine dihydrolase (447 aa).

Substrate-binding positions include 19–28 (AGLSFGNEAS), Asn110, and 137–138 (HR). The active site involves Glu174. Arg213 is a binding site for substrate. The active site involves His249. The substrate site is built by Asp251 and Asn364. Cys370 functions as the Nucleophile in the catalytic mechanism.

This sequence belongs to the succinylarginine dihydrolase family. As to quaternary structure, homodimer.

It carries out the reaction N(2)-succinyl-L-arginine + 2 H2O + 2 H(+) = N(2)-succinyl-L-ornithine + 2 NH4(+) + CO2. Its pathway is amino-acid degradation; L-arginine degradation via AST pathway; L-glutamate and succinate from L-arginine: step 2/5. Its function is as follows. Catalyzes the hydrolysis of N(2)-succinylarginine into N(2)-succinylornithine, ammonia and CO(2). In Yersinia pestis bv. Antiqua (strain Antiqua), this protein is N-succinylarginine dihydrolase.